The primary structure comprises 430 residues: Rho GTPase-activating protein 2 (430 aa).

The disordered stretch occupies residues 1 to 36 (MTGLVMMTKGGGCGGGGKGGRRKSTAEEEEEEEQNQ). Over residues 9 to 18 (KGGGCGGGGK) the composition is skewed to gly residues. The CRIB domain maps to 80–93 (IGWPTNVRHITHVT). The region spanning 125-310 (VSAESMQCSY…TLAEREENAT (186 aa)) is the Rho-GAP domain. The disordered stretch occupies residues 307–372 (ENATGSEGYS…HLSRHSTHED (66 aa)). A compositionally biased stretch (low complexity) spans 316–326 (SPSHSSNSQTD). Residues 347–356 (ECGEEEEVEE) are compositionally biased toward acidic residues. Positions 357–371 (VEQHQEHLSRHSTHE) are enriched in basic and acidic residues.

Homodimerizes via its Rho-GAP domain and forms a tetrameric complex (2:2) with ARAC1/ROP3, ARAC2/ROP7, ARAC4/ROP2, ARAC5/ROP4, ARAC7/ROP9 or ARAC11/ROP1.

In terms of biological role, acts as a GTPase activator for the Rac-type GTPase by converting it to an inactive GDP-bound state. In Arabidopsis thaliana (Mouse-ear cress), this protein is Rho GTPase-activating protein 2 (ROPGAP2).